The following is a 337-amino-acid chain: Viral cathepsin (337 aa).

Positions 1 to 18 are cleaved as a signal peptide; it reads MYLIYYYTIIAVATASIA. A propeptide spans 19–126 (activation peptide); sequence NEKIFYDIDS…VTVAGPSART (108 aa). Intrachain disulfides connect C147-C188, C181-C221, and C276-C324. C150 is an active-site residue. Residues H283 and N303 contribute to the active site.

Belongs to the peptidase C1 family. Post-translationally, synthesized as an inactive proenzyme and activated by proteolytic removal of the inhibitory propeptide.

The catalysed reaction is Endopeptidase of broad specificity, hydrolyzing substrates of both cathepsin L and cathepsin B.. Functionally, cysteine protease that plays an essential role in host liquefaction to facilitate horizontal transmission of the virus. May participate in the degradation of foreign protein expressed by the baculovirus system. In Spodoptera litura multicapsid nucleopolyhedrovirus (SpltMNPV), this protein is Viral cathepsin (VCATH).